We begin with the raw amino-acid sequence, 296 residues long: Phosphatidylglycerol--prolipoprotein diacylglyceryl transferase (296 aa).

The next 3 membrane-spanning stretches (helical) occupy residues 17–37 (LAVR…IVVG), 59–79 (MMFY…VLFY), and 97–117 (GGMS…LFAW). Position 142 (Arg-142) interacts with a 1,2-diacyl-sn-glycero-3-phospho-(1'-sn-glycerol). The next 2 membrane-spanning stretches (helical) occupy residues 230-250 (MGAI…TVEF) and 265-285 (LSMG…MMIW).

It belongs to the Lgt family.

It localises to the cell inner membrane. It carries out the reaction L-cysteinyl-[prolipoprotein] + a 1,2-diacyl-sn-glycero-3-phospho-(1'-sn-glycerol) = an S-1,2-diacyl-sn-glyceryl-L-cysteinyl-[prolipoprotein] + sn-glycerol 1-phosphate + H(+). Its pathway is protein modification; lipoprotein biosynthesis (diacylglyceryl transfer). Catalyzes the transfer of the diacylglyceryl group from phosphatidylglycerol to the sulfhydryl group of the N-terminal cysteine of a prolipoprotein, the first step in the formation of mature lipoproteins. This chain is Phosphatidylglycerol--prolipoprotein diacylglyceryl transferase, found in Burkholderia mallei (strain NCTC 10247).